A 1155-amino-acid chain; its full sequence is MSQLNAYIGRAGTGKSHAMLDEIKTKMKQDPLGDPIIIIAPTQSTFQLEQDFVKDPELNGSLRTEVLHFERLSHRIFQEIGGLTEEYASKGALEMMIFDILQSHRSELNLYQSQTKYYGFSAKLSEQIQDFKKYAVSPEQLEQFISENPLQTRTQDKLHDIALVYRHLEERLADNFVSSEDTLYKFIEKMDESKWLKRAEIYIDGFHNFSTLEYQIIEKLAQCAKSVSILLTTNGDKDPFSLFRKTSSTLTHIEEIAQRQNIDFNLRRFTKQERFENRDLSHLEHSFNEVFFDKAAAEGNINILETSNVREEVNAIARDIIRKAREENIRFQDVAVLYRDETYAHLMESVFPEFDIPFNIDTKKSMTHHPVMEMIRSLLEVIESKWSFEPLMRLFKTQVLTKKFKDNRYLTDILENYVLERGIYGQRWLDDKYFKIEQFNLMGLKRQPMTEETEADYQRVIDLKNYVIDKILRFEKALAEADTAETYAAAFYEAFEQFNLPSQLMTERDELDLAGEHQQAEELDQVWNGFIQTLDDLATVFGNREMTQKRFLELFDVGLEQLEFVMIPQTLDQVSIGSMDLAKVDNKKHIYMLGMNDGTMPQAISNSGLISDDEKKYFQEETQLELSPTADVLQMDEAFVCYIAMTRASTHVTFSYSLMGLNNDDKEVSPFIQNIRDLYTNLDVLNVQYAAQHNPLTVMEHPHQTKIALFEELQSWLNHELTAETWLEAYQAMLHNERLSRGLQYLTSALTFDNKTIQLNQSLSKALYGDKINASVSRFEGYQQCPFKHYTSHGLRLNERTKYKLENFDLGDIFHSVLKYIADKIHGDFRNLTDASIRKLTQEALENILPEVQYNLLNSSAYYRYMSVRIGAIVQSTLTALKYQGTFSKFRPQAFEKSFRKNPKSNEQLAAESLYTSQGISINIRGQIDRIDTFNSKDRSFVNIIDYKSSGYSGTLDLTKVYYGLQMQMMTYMDVVLQNKERLNLAETTEPGGLLYFHVHEPRVNFANWAEMDEDKRQEELLKSFKLNGLINSDPEVLDAEDTRLEPKFKSDIVPIDVGAKGNLNKSSKVADSQTIYKFIEHNKNNFIQIASDIMDGHTQVAPMKYKQKLPCEYCNYRSVCHVDGMIDSKKYRTVDESINPIDLLNQESDEDDEE.

The UvrD-like helicase ATP-binding domain occupies 1–278 (MSQLNAYIGR…FTKQERFENR (278 aa)). Residue 9 to 16 (GRAGTGKS) participates in ATP binding. Residues 270 to 584 (TKQERFENRD…SIGSMDLAKV (315 aa)) enclose the UvrD-like helicase C-terminal domain. [4Fe-4S] cluster contacts are provided by Cys785, Cys1112, Cys1115, and Cys1121.

It belongs to the helicase family. AddB/RexB type 1 subfamily. Heterodimer of AddA and AddB. Mg(2+) is required as a cofactor. The cofactor is [4Fe-4S] cluster.

Functionally, the heterodimer acts as both an ATP-dependent DNA helicase and an ATP-dependent, dual-direction single-stranded exonuclease. Recognizes the chi site generating a DNA molecule suitable for the initiation of homologous recombination. The AddB subunit has 5' -&gt; 3' nuclease activity but not helicase activity. This chain is ATP-dependent helicase/deoxyribonuclease subunit B, found in Staphylococcus carnosus (strain TM300).